The following is a 247-amino-acid chain: 5'-nucleotidase SurE (247 aa).

A divalent metal cation is bound by residues D8, D9, S39, and N91.

This sequence belongs to the SurE nucleotidase family. It depends on a divalent metal cation as a cofactor.

The protein localises to the cytoplasm. The enzyme catalyses a ribonucleoside 5'-phosphate + H2O = a ribonucleoside + phosphate. Its function is as follows. Nucleotidase that shows phosphatase activity on nucleoside 5'-monophosphates. The chain is 5'-nucleotidase SurE from Laribacter hongkongensis (strain HLHK9).